A 786-amino-acid polypeptide reads, in one-letter code: LPS-assembly protein LptD (786 aa).

The signal sequence occupies residues methionine 1–alanine 39.

It belongs to the LptD family. As to quaternary structure, component of the lipopolysaccharide transport and assembly complex. Interacts with LptE and LptA.

The protein resides in the cell outer membrane. Its function is as follows. Together with LptE, is involved in the assembly of lipopolysaccharide (LPS) at the surface of the outer membrane. The sequence is that of LPS-assembly protein LptD from Burkholderia ambifaria (strain ATCC BAA-244 / DSM 16087 / CCUG 44356 / LMG 19182 / AMMD) (Burkholderia cepacia (strain AMMD)).